Reading from the N-terminus, the 235-residue chain is Octanoyltransferase (235 aa).

Residues 52–229 (KNRQASMIFC…SICSALEYIN (178 aa)) form the BPL/LPL catalytic domain. Substrate is bound by residues 89 to 96 (RGGKITWH), 159 to 161 (AIG), and 172 to 174 (GFA). The active-site Acyl-thioester intermediate is Cys-190.

Belongs to the LipB family.

The protein localises to the cytoplasm. It catalyses the reaction octanoyl-[ACP] + L-lysyl-[protein] = N(6)-octanoyl-L-lysyl-[protein] + holo-[ACP] + H(+). The protein operates within protein modification; protein lipoylation via endogenous pathway; protein N(6)-(lipoyl)lysine from octanoyl-[acyl-carrier-protein]: step 1/2. Its function is as follows. Catalyzes the transfer of endogenously produced octanoic acid from octanoyl-acyl-carrier-protein onto the lipoyl domains of lipoate-dependent enzymes. Lipoyl-ACP can also act as a substrate although octanoyl-ACP is likely to be the physiological substrate. The chain is Octanoyltransferase from Tropheryma whipplei (strain Twist) (Whipple's bacillus).